A 273-amino-acid chain; its full sequence is MVRLHIKRGDESQFLFDTSVIVPVEALVKQITAIYNGILKIDRICSEMAELAEHDLKLKDEWEERCVPSGGSVFKKDEIGRRNGHAPNDSMKKVLQKTMEEAKALISKKQAEANVCVTLEMVKEATDQLRGAVMIVYPMGLPPHDPIRMEFENNEDLSGTHAGQLVIQEPESQLWWAGKELQRKQKLSDYVGKNEKTKIIVKIQKRGQGAPGREPVISQEEQKNLMMHYYRRQEELKKLEVDEDISYLNAEWADSNSLKRQFQGVNDIKWKPR.

The protein belongs to the CFAP298 family.

It is found in the cytoplasm. Its subcellular location is the cytoskeleton. The protein localises to the cilium basal body. Its function is as follows. Plays a role in motile cilium function, possibly by acting on outer dynein arm assembly. Seems to be important for initiation rather than maintenance of cilium motility. Required for correct positioning of the cilium at the apical cell surface, suggesting an additional role in the planar cell polarity (PCP) pathway. May suppress canonical Wnt signaling activity. This chain is Cilia- and flagella-associated protein 298-B (cfap298-b), found in Xenopus laevis (African clawed frog).